A 502-amino-acid polypeptide reads, in one-letter code: ATP synthase subunit alpha (502 aa).

169 to 176 (GDRQTGKT) contributes to the ATP binding site.

Belongs to the ATPase alpha/beta chains family. In terms of assembly, F-type ATPases have 2 components, CF(1) - the catalytic core - and CF(0) - the membrane proton channel. CF(1) has five subunits: alpha(3), beta(3), gamma(1), delta(1), epsilon(1). CF(0) has three main subunits: a(1), b(2) and c(9-12). The alpha and beta chains form an alternating ring which encloses part of the gamma chain. CF(1) is attached to CF(0) by a central stalk formed by the gamma and epsilon chains, while a peripheral stalk is formed by the delta and b chains. The F(1)F(0) complex interacts with SpoIIIJ and YqjG; YqgA is found in the same complex.

The protein localises to the cell membrane. Its subcellular location is the membrane raft. It carries out the reaction ATP + H2O + 4 H(+)(in) = ADP + phosphate + 5 H(+)(out). Produces ATP from ADP in the presence of a proton gradient across the membrane. The alpha chain is a regulatory subunit. In Bacillus subtilis (strain 168), this protein is ATP synthase subunit alpha.